The primary structure comprises 379 residues: Orotidine 5'-phosphate decarboxylase (379 aa).

Residues Asp-42, 64 to 66 (KTH), and 99 to 108 (DRKFGDIGHT) each bind substrate. The active-site Proton donor is Lys-101. Positions 165 to 198 (PTMDQFDDAEDAKDDEPATVNDNGSNMMEKPIYA) are disordered. A compositionally biased stretch (acidic residues) spans 169–178 (QFDDAEDAKD). Residues Tyr-331 and Arg-350 each coordinate substrate.

The protein belongs to the OMP decarboxylase family.

The catalysed reaction is orotidine 5'-phosphate + H(+) = UMP + CO2. It participates in pyrimidine metabolism; UMP biosynthesis via de novo pathway; UMP from orotate: step 2/2. In Hypocrea atroviridis (Trichoderma atroviride), this protein is Orotidine 5'-phosphate decarboxylase (pyr4).